Reading from the N-terminus, the 293-residue chain is Magnetosome protein MamB (293 aa).

Residues Met-1–Glu-12 lie on the Cytoplasmic side of the membrane. Residues Met-1–Asp-214 form a transmembrane domain (TMD) region. The helical transmembrane segment at Val-13–Val-33 threads the bilayer. Over Leu-34–Asn-78 the chain is Lumenal. The helical transmembrane segment at Ile-79–Met-99 threads the bilayer. At Tyr-100–Gln-105 the chain is on the cytoplasmic side. Residues Ile-106–Ile-126 traverse the membrane as a helical segment. Topologically, residues Ala-127–Asp-158 are lumenal. The chain crosses the membrane as a helical span at residues Ala-159–Ala-179. At Asp-180–Ala-293 the chain is on the cytoplasmic side. The interval Val-215–Ala-293 is C-terminal domain (CTD). Residues His-245, Asp-247, and His-283 each contribute to the Zn(2+) site.

This sequence belongs to the cation diffusion facilitator (CDF) transporter (TC 2.A.4) family. In terms of assembly, the isolated C-terminal domain (approximately 213-293) forms homodimers. Forms heterodimers with MamM.

Its subcellular location is the magnetosome membrane. Plays a dual, essential role in magnetosome formation; required for magnetosome vesicle formation as well as biomineralization. Probably binds and transports iron. Requires heterodimerization with MamM for stability. The protein is Magnetosome protein MamB (mamB) of Magnetospira sp. (strain QH-2) (Marine magnetic spirillum (strain QH-2)).